The following is a 562-amino-acid chain: Solute carrier family 40 member 1 (562 aa).

Over 1 to 20 the chain is Cytoplasmic; the sequence is MDSPASKKPRCERFREFFKS. Residues 21-50 form a helical membrane-spanning segment; that stretch reads AKFLIYVGHALSTWGDRMWNFAVAVFLVEL. Residue D36 participates in Fe cation binding. At 51–54 the chain is on the extracellular side; that stretch reads YGNS. A helical transmembrane segment spans residues 55-81; that stretch reads LLLTAVYGLVVAGSVLLLGAIIGDWVD. Residues 82–84 lie on the Cytoplasmic side of the membrane; it reads KNP. The helical transmembrane segment at 85–115 threads the bilayer; that stretch reads RLKVAQTSLVVQNSAVILCGALLMAVFQFKQ. At 116-123 the chain is on the extracellular side; that stretch reads QLSSMYDG. Residues 124 to 159 traverse the membrane as a helical segment; it reads WLLTTCYIMVISIANIANLASTAMSITIQRDWVVVV. At 160–161 the chain is on the cytoplasmic side; the sequence is AG. The chain crosses the membrane as a helical span at residues 162-192; the sequence is DDRSKLADMNATVRIIDQLTNILAPMLVGQI. At 193-199 the chain is on the extracellular side; it reads MAFGSHF. The chain crosses the membrane as a helical span at residues 200–226; it reads IGCGFISGWNLFSMCLEYFLLWKVYQK. Residues 227–300 are Cytoplasmic-facing; the sequence is TPALAFKAGQ…DGWVAYYNQS (74 aa). A helical membrane pass occupies residues 301 to 327; it reads IFFAGMSLAFLYMTVLGFDCITTGYAY. Residue C320 participates in Fe cation binding. Residues 328 to 332 lie on the Extracellular side of the membrane; sequence TQGLN. Residues 333–360 traverse the membrane as a helical segment; that stretch reads GSVLSLLMGASAVSGICGTVAFTWIRKK. Residues 361–362 lie on the Cytoplasmic side of the membrane; it reads CG. A helical transmembrane segment spans residues 363–385; the sequence is LIRTGFIAGVTQLSCLTLCVASV. Residues 386–444 lie on the Extracellular side of the membrane; that stretch reads FAPGSPFDLSVSPFEEVLRHLFGDSGSLRESPTFIPTTEPPIQANVTVFEEAPPVESYM. Residues 445–474 traverse the membrane as a helical segment; it reads SVGLLFAGVIAARVGLWSFDLTVTQLIQEN. Topologically, residues 475–479 are cytoplasmic; that stretch reads VIESE. A helical membrane pass occupies residues 480 to 504; that stretch reads RGVINGVQNSMNYLLDLLHFIMVIL. H498 is a Fe cation binding site. Residues 505 to 507 are Extracellular-facing; sequence APN. A helical transmembrane segment spans residues 508–533; that stretch reads PEAFGLLVIISVSFVAMGHMMYFRFA. Residues 534–562 lie on the Cytoplasmic side of the membrane; that stretch reads YKSLGSRLFLFCSPEQKPDPNIPSLPNSV.

Belongs to the ferroportin (FP) (TC 2.A.100) family. SLC40A subfamily. In terms of tissue distribution, expressed in the yolk sac and placenta.

It localises to the cell membrane. The protein resides in the basolateral cell membrane. The catalysed reaction is Fe(2+)(in) = Fe(2+)(out). Its function is as follows. Transports Fe(2+) from the inside of a cell to the outside of the cell, playing a key role for maintaining systemic iron homeostasis. May be involved in transfer of Fe(2+) between maternal and fetal circulation. This chain is Solute carrier family 40 member 1 (slc40a1), found in Danio rerio (Zebrafish).